A 149-amino-acid polypeptide reads, in one-letter code: SsrA-binding protein (149 aa).

The segment at 123–149 is disordered; the sequence is KQFDKRETEKQRDWQREKARIMKGGKE.

The protein belongs to the SmpB family.

It localises to the cytoplasm. In terms of biological role, required for rescue of stalled ribosomes mediated by trans-translation. Binds to transfer-messenger RNA (tmRNA), required for stable association of tmRNA with ribosomes. tmRNA and SmpB together mimic tRNA shape, replacing the anticodon stem-loop with SmpB. tmRNA is encoded by the ssrA gene; the 2 termini fold to resemble tRNA(Ala) and it encodes a 'tag peptide', a short internal open reading frame. During trans-translation Ala-aminoacylated tmRNA acts like a tRNA, entering the A-site of stalled ribosomes, displacing the stalled mRNA. The ribosome then switches to translate the ORF on the tmRNA; the nascent peptide is terminated with the 'tag peptide' encoded by the tmRNA and targeted for degradation. The ribosome is freed to recommence translation, which seems to be the essential function of trans-translation. In Cupriavidus taiwanensis (strain DSM 17343 / BCRC 17206 / CCUG 44338 / CIP 107171 / LMG 19424 / R1) (Ralstonia taiwanensis (strain LMG 19424)), this protein is SsrA-binding protein.